Reading from the N-terminus, the 603-residue chain is MTDVPVSRIRNFCIIAHIDHGKSTLADRMLQMTETVAQRKMKEQFLDNMDLERERGITIKLQAARMNYRSKDGEDYVLNLIDTPGHVDFSYEVSRSLAACEGALLVVDSSQGVEAQTLANVYLALENNLEIIPILNKIDLPGSEPERVANEIEEVVGLDCTGIIKASAKAGIGVDEILESIVHLVPPPSDTVDKPLRALIFDSYYDPYRGVIVYFRVMDGTVKTGDRVRLMASGKEYEIDELGVLSPNQIEVESLHAGEVGYFAAAIKAVEDARVGDTITLAEAPAKEPLPGYTEAKPMVFCGLFPTDADQYEDLREALNRLKLNDAALSYEPETSSAMGFGFRCGFLGLLHMEIVQERLEREYDLDLITTAPSVIYRVTTIDGEVIQVDNPSLLPSPQEREKVEEPYIEVEMITPETYVGTLMELCQSRRGVFKDMRYFTLSRTSLVYELPLAEVVTDFFDQLKSRSRGYASMEYQLIGYRENPLVKLDILVNGDSVDALAMIVHRDKAYYVGRALTEKLKELIPRHQFKVPIQAAIGSKVIASEHIPALRKDVLAKCYGGDISRKKKLLQKQAKGKKRMKAIGTVDVPQEAFMAVLKLDPQ.

The tr-type G domain occupies 7–189 (SRIRNFCIIA…SIVHLVPPPS (183 aa)). Residues 19-24 (DHGKST) and 136-139 (NKID) each bind GTP.

It belongs to the TRAFAC class translation factor GTPase superfamily. Classic translation factor GTPase family. LepA subfamily.

It localises to the cell inner membrane. It catalyses the reaction GTP + H2O = GDP + phosphate + H(+). Its function is as follows. Required for accurate and efficient protein synthesis under certain stress conditions. May act as a fidelity factor of the translation reaction, by catalyzing a one-codon backward translocation of tRNAs on improperly translocated ribosomes. Back-translocation proceeds from a post-translocation (POST) complex to a pre-translocation (PRE) complex, thus giving elongation factor G a second chance to translocate the tRNAs correctly. Binds to ribosomes in a GTP-dependent manner. This is Elongation factor 4 from Crocosphaera subtropica (strain ATCC 51142 / BH68) (Cyanothece sp. (strain ATCC 51142)).